The chain runs to 196 residues: MNKFIVFEGIDGSGKTTQAKLLADYLNGIYTCEPTNGEIGQLIRKVLGGKNCEKESLALLFAGDRVEHIKEIEHKLIENMVICDRYVYSSMVYQSIQGIDIDFIASINRFAKIPDVLIYLDVSIEESLKRMGDRDSKEIFENKEILQKVNKKYMNIINERLFEPKNGYILINTDNKTVEEVHKEIIKKLMDKKIIL.

9–16 is an ATP binding site; the sequence is GIDGSGKT.

This sequence belongs to the thymidylate kinase family.

It catalyses the reaction dTMP + ATP = dTDP + ADP. The chain is Probable thymidylate kinase from Methanococcus aeolicus (strain ATCC BAA-1280 / DSM 17508 / OCM 812 / Nankai-3).